We begin with the raw amino-acid sequence, 354 residues long: Protein NDH-DEPENDENT CYCLIC ELECTRON FLOW 5 (354 aa).

The N-terminal 49 residues, 1–49 (MALVHYMNVSRSTFPLSRSSKINLSSSFASLPLQFHKNIKRLESSVPPS), are a transit peptide targeting the chloroplast.

The protein localises to the plastid. It is found in the chloroplast thylakoid membrane. Required for both formation and activity of the chloroplast NAD(P)H dehydrogenase (NDH) complex of the photosynthetic electron transport chain. May function in assembly or stabilization of the NDH complex. The sequence is that of Protein NDH-DEPENDENT CYCLIC ELECTRON FLOW 5 from Arabidopsis thaliana (Mouse-ear cress).